We begin with the raw amino-acid sequence, 501 residues long: Acetylcholine receptor subunit beta (501 aa).

The first 23 residues, 1-23 (MTPGALLMLLGALGAPLAPGVRG), serve as a signal peptide directing secretion. At 24 to 244 (SEAEGRLREK…VIFYLIIRRK (221 aa)) the chain is on the extracellular side. An intrachain disulfide couples C151 to C165. N-linked (GlcNAc...) asparagine glycosylation occurs at N164. 3 helical membrane passes run 245-269 (PLFY…VFYL), 277-295 (MGLS…LLLA), and 311-332 (YLMF…VLNL). At 333-469 (HHRSPHTHQM…WQFVAMVVDR (137 aa)) the chain is on the cytoplasmic side. Y390 carries the phosphotyrosine; by Tyr-kinases modification. Residues 470–488 (LFLWTFIIFTSVGTLVIFL) traverse the membrane as a helical segment.

Belongs to the ligand-gated ion channel (TC 1.A.9) family. Acetylcholine receptor (TC 1.A.9.1) subfamily. Beta-1/CHRNB1 sub-subfamily. As to quaternary structure, pentamer of two alpha chains, and one each of the beta, delta, and gamma (in immature muscle) or epsilon (in mature muscle) chains. The muscle heteropentamer composed of alpha-1, beta-1, delta, epsilon subunits interacts with the alpha-conotoxin ImII.

The protein resides in the postsynaptic cell membrane. The protein localises to the cell membrane. It carries out the reaction K(+)(in) = K(+)(out). It catalyses the reaction Na(+)(in) = Na(+)(out). In terms of biological role, after binding acetylcholine, the AChR responds by an extensive change in conformation that affects all subunits and leads to opening of an ion-conducting channel across the plasma membrane. In Homo sapiens (Human), this protein is Acetylcholine receptor subunit beta.